Consider the following 152-residue polypeptide: Photosystem II extrinsic protein U, chloroplastic (152 aa).

The N-terminal 35 residues, 1-35 (MDSTAFVGAAAPLRVAAAARSTICMAAADDKPVVS), are a transit peptide targeting the chloroplast. A thylakoid-targeting transit peptide spans 36–59 (RRAALTGAAAAALAAVAGSLPALA).

The protein belongs to the PsbU family. PSII is composed of 1 copy each of membrane proteins PsbA, PsbB, PsbC, PsbD, PsbE, PsbF, PsbH, PsbI, PsbJ, PsbK, PsbL, PsbM, PsbT, PsbX, PsbY, PsbZ, Psb30/Ycf12, at least 3 peripheral proteins of the oxygen-evolving complex and a large number of cofactors. It forms dimeric complexes. The oxygen-evolving complex in red algae is composed of PsbO (OEC33), PsbQ', cytochrome c-550 and PsbU. In terms of processing, predicted to be translocated into the thylakoid lumen by the Tat system.

Its subcellular location is the plastid. It is found in the chloroplast thylakoid membrane. One of the extrinsic, lumenal subunits of photosystem II (PSII). PSII is a light-driven water plastoquinone oxidoreductase, using light energy to abstract electrons from H(2)O, generating a proton gradient subsequently used for ATP formation. The extrinsic proteins stabilize the structure of photosystem II oxygen-evolving complex (OEC), the ion environment of oxygen evolution and protect the OEC against heat-induced inactivation. The protein is Photosystem II extrinsic protein U, chloroplastic of Pyropia yezoensis (Susabi-nori).